Here is a 18562-residue protein sequence, read N- to C-terminus: Titin homolog (18562 aa).

Residues 90–176 (PKFIQVIKAY…GVSTSYGYIT (87 aa)) form the Ig-like 1 domain. Residues 384-404 (RFHPQPPKPPRAGTSRRFLPE) form a disordered region. 4 consecutive Ig-like domains span residues 406-493 (PKFV…TQVT), 821-913 (PKIV…AFIN), 943-1038 (PKFI…LTIS), and 1135-1225 (PRFE…LTVD). Cys-842 and Cys-897 are oxidised to a cystine. The disordered stretch occupies residues 1336 to 1360 (LPPVQKSMSVQEEKASSQRTPSPMN). The 84-residue stretch at 1679-1762 (PKFLRKLVNC…ASNVAGTTFS (84 aa)) folds into the Ig-like 6 domain. Cysteines 1700 and 1751 form a disulfide. Coiled-coil stretches lie at residues 1766–1786 (LKLS…SEIK), 2011–2038 (QSLD…ERTS), and 2065–2085 (ISDQ…ALQE). A disordered region spans residues 2155–2177 (RKGSDKDKRKATRIKRVPSAHSA). A compositionally biased stretch (basic residues) spans 2163–2172 (RKATRIKRVP). Positions 2205 to 2231 (LKQNEEAKEIQELFVKIEKEINTIAEL) form a coiled coil. 2 disordered regions span residues 2298 to 2459 (IIGI…TADA) and 2614 to 2637 (KSSL…EVTA). A compositionally biased stretch (low complexity) spans 2309-2323 (RRPSSTPRGSTRSSN). Polar residues predominate over residues 2324-2341 (LTTSQDSQATTKMTVSSE). Residues 2606-2630 (LMQTLASEKSSLKAAEEDEKEGEEE) adopt a coiled-coil conformation. Residues 2621–2636 (EEDEKEGEEEGEEEVT) show a composition bias toward acidic residues. Ig-like domains lie at 3095–3177 (KEVM…SGLY) and 3179–3264 (TERS…SFVS). Residues 3362 to 3692 (EVPKVAEPSE…NAEAQKVVDS (331 aa)) are disordered. Acidic residues predominate over residues 3655–3665 (SEEETPLEETN). Ig-like domains are found at residues 3789 to 3878 (PVFT…CEIV), 3897 to 3985 (PHFV…CTID), and 4038 to 4125 (PPYF…CVLT). Cystine bridges form between Cys-3919/Cys-3969 and Cys-4059/Cys-4109. Disordered stretches follow at residues 4553 to 4599 (QSRE…SAPT), 4634 to 4699 (TVEP…EIVE), 4750 to 4814 (GSTA…TSEV), 4826 to 4855 (PVPE…EVQP), 4912 to 4931 (STAA…VESK), 4950 to 4969 (PETS…PVES), 4989 to 5216 (PETS…EILE), 5267 to 5294 (GSTA…EVEP), 5306 to 5325 (PETS…SVES), 5345 to 5372 (PETS…EVEP), 5428 to 6101 (GSTA…VEPT), 6127 to 6157 (VQVP…EVQP), 6214 to 6900 (STAA…ETSE), and 6930 to 8453 (APVE…DDKL). A compositionally biased stretch (basic and acidic residues) spans 4555 to 4577 (RELDNTERNFTVNKEKDESKKPS). PVET repeat units follow at residues 4599 to 4626 (TVEK…KDVP), 4627 to 4665 (VPET…KDVP), 4666 to 4704 (VPET…KDVT), 4755 to 4787 (PAQE…KDVP), 4788 to 4826 (VPET…KDVP), 4827 to 4865 (VPET…KDVT), 4917 to 4948 (AQEP…KDVP), 4949 to 4987 (VPET…KDVP), 4988 to 5026 (VPET…KDVP), 5027 to 5065 (VPET…KDVP), 5066 to 5104 (VPET…KDVP), 5105 to 5143 (VPET…KDVP), 5144 to 5182 (VPET…KVVP), 5183 to 5221 (VPET…KDVT), 5273 to 5304 (AQEP…KDVP), 5305 to 5343 (VPET…KDVP), 5344 to 5382 (VPET…KDVT), 5434 to 5465 (AQEP…KDVP), 5466 to 5504 (VPET…KDVP), 5505 to 5543 (VPET…KVVP), 5544 to 5582 (VPET…KDVP), 5583 to 5621 (VPET…KDVP), 5622 to 5660 (VPET…KDVS), 5661 to 5699 (VPET…KDVS), 5700 to 5738 (VPET…KDVP), 5739 to 5777 (VPET…KDVQ), 5778 to 5816 (VPET…KDVP), 5817 to 5855 (VPET…KDVP), 5856 to 5894 (VPET…KDVS), 5895 to 5933 (VPET…KDVP), 5934 to 5972 (VPET…KDVQ), 5973 to 6011 (VPET…KDVP), 6012 to 6050 (VPET…KDVQ), 6051 to 6089 (VPET…KDVS), 6090 to 6128 (VPET…KDVQ), 6129 to 6167 (VPET…KDVT), 6219 to 6250 (AHEP…KDVP), 6251 to 6289 (VPET…KDLP), 6290 to 6328 (VPET…KDVP), 6329 to 6367 (VPET…KDVP), 6368 to 6406 (VPET…KDVP), 6407 to 6445 (VPET…KDVS), 6446 to 6484 (VPET…KDVS), 6485 to 6523 (VPET…KDVP), 6524 to 6562 (VPET…KDVQ), 6563 to 6601 (VPET…KDVP), 6602 to 6640 (VPET…KDVP), 6641 to 6679 (VPET…KDVQ), 6680 to 6718 (VPET…KDVP), 6719 to 6757 (VPET…KDVA), 6758 to 6796 (VPET…KDVP), 6797 to 6835 (VPET…KDVP), 6836 to 6874 (VPET…KDVP), 6875 to 6913 (VPET…KDVP), 6914 to 6952 (VPEA…KDVP), and 6953 to 6991 (VPEA…KLKK). Composition is skewed to basic and acidic residues over residues 4638–4651 (TVEK…KETS) and 4677–4691 (TVEK…EKSE). A compositionally biased stretch (basic and acidic residues) spans 4960-4969 (TVEKLKPVES). Over residues 5038-5051 (TVEKLKPVESKETS) the composition is skewed to basic and acidic residues. 2 stretches are compositionally biased toward basic and acidic residues: residues 5116 to 5129 (TVEK…KETS) and 5155 to 5168 (TVEK…KETS). Residues 5212–5235 (AEILEQKDVTCEEEIKELLTEVEV) adopt a coiled-coil conformation. A compositionally biased stretch (basic and acidic residues) spans 5316 to 5325 (TVEKLKSVES). Composition is skewed to basic and acidic residues over residues 5477–5490 (TVEK…KETS) and 5516–5529 (TVEK…KETS). Basic and acidic residues-rich tracts occupy residues 6690 to 6704 (PTKE…KETS), 6729 to 6743 (PTKE…KETS), 6768 to 6782 (PTKE…KETS), 6807 to 6821 (PTKE…KETS), 6846 to 6860 (PTKE…KETS), and 6885 to 6899 (PTKE…KETS). Basic and acidic residues-rich tracts occupy residues 6972–7606 (ESKE…DNFK), 7613–7630 (LQKE…DNFK), 7637–8062 (LQKE…DNFK), and 8069–8453 (LQKE…DDKL). The stretch at 6984 to 7812 (QADAKLKKEK…DKLKQETDAK (829 aa)) forms a coiled coil. 96 BLUE repeats span residues 6992–6996 (EKDDK), 6997–7012 (HKQE…NDDK), 7013–7028 (LKQE…NDDK), 7029–7044 (LKQE…NDDK), 7045–7060 (LKQE…NDDK), 7061–7076 (LKQE…NDDK), 7077–7092 (LKQE…NDDK), 7093–7108 (LKQE…NDDK), 7109–7124 (LKQE…NDDK), 7125–7140 (LKQE…NDDK), 7141–7156 (LKQE…NDDK), 7157–7172 (LKQE…NDDK), 7173–7188 (LKQE…NDDK), 7189–7204 (LKQE…KHDK), 7205–7220 (LKQE…NDDK), 7221–7236 (LKQE…NDDK), 7237–7252 (LKQE…KDDK), 7253–7268 (LKQE…KDDK), 7269–7284 (LKQD…KDDK), 7285–7300 (LKQE…KDDK), 7301–7316 (LKHE…KDDK), 7317–7332 (LKQE…KDDR), 7333–7348 (LKKD…KDDK), 7349–7364 (LKQE…KDDK), 7365–7380 (LKHE…KDDK), 7381–7396 (LKQE…KDDK), 7397–7412 (LKQE…KDDK), 7413–7428 (LKQE…KDDK), 7429–7444 (LKQE…KDDK), 7445–7460 (LKQE…KDDK), 7461–7476 (LKQE…KDDK), 7477–7492 (LKQE…KDDK), 7493–7508 (LKQE…KDDK), 7509–7524 (LKQD…KDDK), 7525–7540 (LKQE…KDDK), 7541–7556 (LKHE…KDDK), 7557–7572 (LKQE…KDDK), 7573–7588 (LKQD…KDDK), 7589–7604 (LKHE…KDDN), 7605–7620 (FKQE…KDDK), 7621–7628 (LKQEKDDN), 7629–7644 (FKQE…KDDK), 7645–7652 (LKQEKDDK), 7653–7668 (LKQE…KDDK), 7669–7684 (LKQE…KDDK), 7685–7700 (LKQE…KDDK), 7701–7716 (LKQE…KDDK), 7717–7732 (LKQE…KDDK), 7733–7748 (LKQE…KDDK), 7749–7764 (LKQE…KDDK), 7765–7772 (LKQEKNDK), 7773–7788 (LKQE…KDDK), 7789–7804 (LKQE…KDDK), 7805–7820 (LKQE…KDDK), 7821–7836 (LKQE…KDDK), 7837–7852 (LKQE…KDDK), 7853–7868 (LKQE…KDNK), 7869–7884 (LKQE…KDNK), 7885–7900 (LKQE…KDDK), 7901–7916 (LKQE…KDDK), 7917–7932 (LKQE…KDDK), 7933–7948 (LKQE…KDDK), 7949–7964 (LKQE…KDDK), 7965–7980 (LKQE…KDDK), 7981–7996 (LKQE…KDDK), 7997–8012 (LKQE…KDDK), 8013–8028 (LKQE…KDDK), 8029–8044 (LKQE…KDDK), 8045–8060 (LKQE…KDDN), 8061–8076 (FKQE…KDDK), 8077–8084 (LKQEKDDK), 8085–8100 (LKQE…KDDK), 8101–8116 (LKQE…KDDK), 8117–8132 (LKQE…KDDK), 8133–8148 (LKQE…KDDK), 8149–8164 (LKQE…KDDK), 8165–8180 (LKQE…KDDK), 8181–8196 (LKQE…KDDK), 8197–8212 (LKQE…KDDK), 8213–8228 (LKQE…KDDK), 8229–8244 (LKQE…KDDK), 8245–8260 (LKQE…KDDK), 8261–8276 (LKQE…KDDK), 8277–8292 (LKQE…KDDK), 8293–8308 (LKQE…KDNK), 8309–8324 (LKQE…KDNK), 8325–8340 (LKQE…KDDK), 8341–8356 (LKQE…KDDK), 8357–8371 (LKQE…EKDD), 8373–8388 (LKQE…KDDK), 8389–8404 (LKQE…KDDK), 8405–8420 (LKQE…KDDK), 8421–8436 (LKQE…KDDK), 8437–8452 (LKQE…KDDK), 8453–8468 (LKQE…KDDK), and 8469–8484 (LKQE…KGDK). Positions 7876-8273 (KLKKEKDNKL…EADAKLKKDK (398 aa)) form a coiled coil. Residues 8316–8490 (KLKKEKDNKL…KGDKLKLEDQ (175 aa)) are a coiled coil. The span at 8599-8611 (KHLKKKKKHHKKE) shows a compositional bias: basic residues. A disordered region spans residues 8599 to 8626 (KHLKKKKKHHKKEKIAVKETEQDEKTVS). Positions 8612-8626 (KIAVKETEQDEKTVS) are enriched in basic and acidic residues. In terms of domain architecture, Fibronectin type-III 1 spans 8950–9041 (KPRKAQLVAL…EIIEVNTLDY (92 aa)). Disordered regions lie at residues 9079 to 9104 (IEEH…LDSE), 9147 to 9436 (VQKI…AAAE), 9481 to 9609 (EEQS…ETES), 9702 to 10224 (ADAV…ESRI), 10239 to 10274 (ESDD…EDSP), 10539 to 11018 (QSAP…DSFT), 11030 to 11111 (EDAV…QKDQ), 11123 to 11213 (KKLA…QDKT), 11225 to 11387 (AKTT…SLTS), 11420 to 11592 (KGLN…NPEL), 11624 to 11825 (LTKK…SDNL), 11872 to 11955 (LSAH…TSLS), 11996 to 12054 (TNLI…LQKN), 12397 to 12418 (GRRV…RKKR), 12537 to 12974 (EESR…PAES), 13026 to 13045 (EAAK…TEVV), 13065 to 13261 (AAEA…LNDK), 13283 to 13514 (QAQA…EQLK), 13553 to 13574 (EEKQ…KLKL), and 13594 to 13874 (EKLA…RRTG). Residues 9084-9093 (KLKKKSKKSK) show a composition bias toward basic residues. 2 stretches are compositionally biased toward basic and acidic residues: residues 9172–9184 (VKKD…KKSL) and 9191–9202 (TKKEIQGKPEKK). Residues 9213–9231 (SSISETSETLTKDLTQTKQ) show a composition bias toward polar residues. The segment covering 9232–9267 (SEPEPAKRTTETSVQDEVKRKTETTSKSKQTTEEHP) has biased composition (basic and acidic residues). Residues 9273 to 9283 (SDSSISSTSDA) show a composition bias toward low complexity. Basic and acidic residues predominate over residues 9295-9332 (EAQKVTEKPETAKLESKSKMTEDTTKESDNKETVDEKP). Positions 9346 to 9359 (STISETSETSAVES) are enriched in low complexity. A coiled-coil region spans residues 9371-9510 (AAVDKEKKQK…QTKAKAAEKQ (140 aa)). Composition is skewed to basic and acidic residues over residues 9373–9436 (VDKE…AAAE) and 9481–9521 (EEQS…KSNK). Over residues 9547–9558 (SSISQKSDTSKT) the composition is skewed to low complexity. Residues 9577 to 9749 (TSKQKETDKK…QTVEEQAKLD (173 aa)) adopt a coiled-coil conformation. Basic and acidic residues-rich tracts occupy residues 9578 to 9609 (SKQK…ETES) and 9702 to 9783 (ADAV…DEKP). Positions 9798–9809 (SISQKSVTSKTV) are enriched in polar residues. 3 stretches are compositionally biased toward basic and acidic residues: residues 9819–10004 (ETQK…DEKP), 10040–10149 (ETQK…KSEN), and 10162–10196 (VKSE…EPKE). Coiled coils occupy residues 9822 to 9995 (KVAD…TEEA) and 10046 to 10129 (EADK…TSKK). Positions 10197 to 10206 (KKKIIKKKKD) are enriched in basic residues. The span at 10207–10224 (TTKPQEASKELSSDESRI) shows a compositional bias: basic and acidic residues. Polar residues predominate over residues 10239-10250 (ESDDLSTASTIK). The Fibronectin type-III 2 domain maps to 10461-10553 (KPTSLQVTST…DTIEATTQAE (93 aa)). Positions 10566–10609 (EKVKEPVSKKPENTKESEGHKKRDRKESEDHDENNLGKSGKDEF) are enriched in basic and acidic residues. Over residues 10612–10637 (SGESGTSNQNEESAQLNTSFTSTEQH) the composition is skewed to polar residues. Over residues 10663 to 10680 (IDADVVEVEYDEQGDDIP) the composition is skewed to acidic residues. The segment covering 10707-10716 (MAEKDSDAME) has biased composition (basic and acidic residues). Positions 10779–10790 (ADQTGMSIQDLN) are enriched in polar residues. Composition is skewed to basic and acidic residues over residues 10840–10852 (QLDK…DDKM) and 10863–10884 (KKPE…KESD). The span at 10961–10975 (LSTSEQVENASQNLG) shows a compositional bias: polar residues. Composition is skewed to basic and acidic residues over residues 10999 to 11009 (IHGEAESKLGE), 11045 to 11055 (SAEKTSLEVRD), and 11076 to 11089 (SNRD…RDLN). Residues 11018 to 11064 (TLQDLYEELKAKEDAVEAGAETSNADQSAEKTSLEVRDMKKKMKKKQ) adopt a coiled-coil conformation. The segment covering 11090 to 11108 (TQHSNQTGEDESSTFNFGQ) has biased composition (polar residues). The segment covering 11159–11173 (KKGEENEKTKFEAKH) has biased composition (basic and acidic residues). Residues 11174–11187 (LGSSSASDSLAEST) are compositionally biased toward low complexity. 3 stretches are compositionally biased toward basic and acidic residues: residues 11195–11211 (KGEV…KNQD), 11271–11280 (IPDKNRDSDK), and 11295–11318 (ESAE…EKTL). Positions 11374 to 11387 (SKVTTSFADESLTS) are enriched in polar residues. 2 stretches are compositionally biased toward basic and acidic residues: residues 11440–11464 (KVKD…KDQK) and 11472–11485 (GSKD…EEKT). Residues 11503 to 11515 (MTDQKNVQESQYA) are compositionally biased toward polar residues. Composition is skewed to basic and acidic residues over residues 11624–11635 (LTKKQDENDAKK), 11645–11669 (AKKD…DSRE), and 11722–11735 (VSEK…EKTV). Over residues 11754–11767 (ESLNASSALSTTDV) the composition is skewed to polar residues. Residues 11916 to 11937 (AEDKYVESRKKTTLKKKPEQKQ) show a composition bias toward basic and acidic residues. The stretch at 12408–12428 (ELDDAKKRKKRRIKRVVERRN) forms a coiled coil. Residues 12432 to 12547 (PRLTQLIPPR…ESRDDDKSVD (116 aa)) enclose the Ig-like 12 domain. 3 stretches are compositionally biased toward basic and acidic residues: residues 12537–12547 (EESRDDDKSVD), 12555–12567 (LEEK…DKSK), and 12609–12689 (VGAK…KKDA). Residues 12690–12701 (SQPSSSKESSPP) show a composition bias toward low complexity. A compositionally biased stretch (polar residues) spans 12729-12740 (TMHSETNITTTI). 3 stretches are compositionally biased toward basic and acidic residues: residues 12766-12839 (ESAK…KNKS), 12852-12865 (ETKK…EVPK), and 12889-12940 (PADD…DDKS). The stretch at 12797-12828 (KKSEKKDEVTAEKQSTEALIESKKKEVDESKI) forms a coiled coil. A coiled-coil region spans residues 12980–13103 (AEVNKAKKQK…LKLEEESAAK (124 aa)). Composition is skewed to basic and acidic residues over residues 13065-13124 (AAEA…KAGE), 13133-13145 (PTSK…KDVG), 13176-13191 (TDSE…DEPT), 13203-13261 (EADK…LNDK), 13283-13327 (QAQA…EKQA), 13337-13354 (AVKK…EANK), and 13361-13416 (LKIE…DEKP). The stretch at 13237 to 13380 (LDAQEKIKKV…SKQTVEEQAK (144 aa)) forms a coiled coil. The span at 13431-13442 (SISQKSETSKTV) shows a compositional bias: polar residues. The segment covering 13452–13514 (ETQKVADAAR…KQKEKDEQLK (63 aa)) has biased composition (basic and acidic residues). Residues 13455–13628 (KVADAARKQK…ETKSKQTEEA (174 aa)) adopt a coiled-coil conformation. Basic and acidic residues predominate over residues 13594-13637 (EKLAQEQSRLEDEAKKSAEKQKLESETKSKQTEEAPKESVDEKP). The segment covering 13651-13662 (SSISQKSKSAKS) has biased composition (low complexity). The segment covering 13684–13696 (KVEQSPDESTSAT) has biased composition (polar residues). The span at 13697 to 13735 (IKRDPAQKTEEISKQDDGDEKKTTTDGKPPKPEDSEATP) shows a compositional bias: basic and acidic residues. The span at 13747–13760 (SDSVASDASLADVS) shows a compositional bias: low complexity. Positions 13761–13770 (KLSDDVEEKP) are enriched in basic and acidic residues. Residues 13784–13793 (SVISETSSVD) show a composition bias toward polar residues. Composition is skewed to basic and acidic residues over residues 13795–13808 (IKPE…EKAE) and 13824–13843 (SEPK…DMMT). Residues 13963–14036 (PVDFVKYLPR…RAKYEDSGKY (74 aa)) enclose the Ig-like 13 domain. Fibronectin type-III domains follow at residues 14153–14247 (APGD…TGSP), 14253–14348 (VEFP…TVEG), and 14350–14448 (VPEI…VLAD). Ig-like domains lie at 14451-14542 (PRVL…VGIS), 14550-14634 (SSFS…VIVN), and 14638-14727 (PHIL…LVFE). Cys-14568 and Cys-14618 are oxidised to a cystine. Fibronectin type-III domains lie at 14826-14920 (APCD…TLES) and 14937-15027 (ILRT…LVPG). Residues 15011 to 15180 (VSSPSEETNP…TGKETTEKKK (170 aa)) are disordered. Basic and acidic residues-rich tracts occupy residues 15034–15060 (KTEK…EKQV) and 15085–15117 (KVAE…ESRR). Residues 15118 to 15132 (GSLQASSDNESVTTT) show a composition bias toward polar residues. Residues 15133–15177 (SEKRSEAELEKNSEKSAEKKSTSADLEAADKAETEKSETGKETTE) show a composition bias toward basic and acidic residues. Ig-like domains are found at residues 15180–15274 (KKVV…VSIA) and 15283–15371 (PKVE…IALR). Fibronectin type-III domains lie at 15383-15475 (PTGP…LKKK) and 15503-15596 (QIGK…TTES). Positions 15470 to 15503 (TTLKKKEETGKQKSEKSESDEKKSESDKVSELKQ) are disordered. Residues 15473 to 15503 (KKKEETGKQKSEKSESDEKKSESDKVSELKQ) are compositionally biased toward basic and acidic residues. Ig-like domains follow at residues 15599–15687 (PAFT…CKLT) and 15692–15786 (PEIN…IQVT). Residues 15791-15883 (APGKPAVEDQ…DESELVVVKN (93 aa)) form the Fibronectin type-III 10 domain. In terms of domain architecture, Protein kinase spans 15934 to 16189 (YIIHEELGKG…VQDALRHPWI (256 aa)). ATP is bound by residues 15940–15948 (LGKGAYGTV) and Lys-15963. Asp-16055 serves as the catalytic Proton acceptor. Residues 16206 to 16264 (KMQPKLDKSGVPARQKRNFLSLKRWSDDLLPIGRLAKRGAIFRRLTMDGVFERNIAFDT) are autoinhibitory domain. 4 consecutive Ig-like domains span residues 16268 to 16358 (PSVK…AKLS), 16500 to 16575 (GKQL…VAKN), 16605 to 16692 (PRFR…FSVV), and 16705 to 16789 (PKFL…KDFT). Cystine bridges form between Cys-16290–Cys-16342, Cys-16508–Cys-16571, Cys-16627–Cys-16677, and Cys-16726–Cys-16778. The tract at residues 16805 to 16827 (LTPVRSRSRSRSRSPSVVGGEIQ) is disordered. Ig-like domains lie at 16829–16918 (PPVV…AIVV), 16932–17025 (PTFV…LTIS), and 17037–17126 (PYFI…TEVS). The segment at 17121-17169 (QNTEVSVTKSKEVKEKKEKKKVEKKDEGKKKPGRPGLPRPSGASKTEQV) is disordered. The span at 17129-17150 (KSKEVKEKKEKKKVEKKDEGKK) shows a compositional bias: basic and acidic residues. Positions 17154–17245 (RPGLPRPSGA…MTSTLKTASV (92 aa)) constitute a Fibronectin type-III 11 domain. 11 consecutive Ig-like domains span residues 17249-17336 (PQFT…CQVT), 17358-17447 (PTLQ…CNVA), 17457-17548 (PSFS…VMIA), 17570-17661 (PRFT…TQVI), 17676-17765 (PKFT…QATT), 17782-17873 (PRFV…LNVS), 18008-18097 (PKFM…SEID), 18121-18213 (PNFI…LQVS), 18224-18316 (PPLF…MQLD), 18329-18417 (PRVF…LELT), and 18429-18519 (PKFN…MILS). 2 cysteine pairs are disulfide-bonded: Cys-17379–Cys-17431 and Cys-17478–Cys-17530. Cys-17697 and Cys-17754 are joined by a disulfide. Cys-18143 and Cys-18195 are oxidised to a cystine.

This sequence belongs to the protein kinase superfamily. CAMK Ser/Thr protein kinase family. Interacts (via C-terminus) with myosin. Interacts with actin. Mg(2+) serves as cofactor. Expression is restricted to body wall, enteric and vulval muscles.

The protein localises to the cytoplasm. It localises to the myofibril. It is found in the sarcomere. Its subcellular location is the a band. The protein resides in the i band. The protein localises to the nucleus membrane. The catalysed reaction is L-seryl-[protein] + ATP = O-phospho-L-seryl-[protein] + ADP + H(+). It catalyses the reaction L-threonyl-[protein] + ATP = O-phospho-L-threonyl-[protein] + ADP + H(+). In terms of biological role, serine/threonine-protein kinase. Key component in the assembly and functioning of muscles. By providing connections at the level of individual microfilaments, it contributes to the fine balance of forces between the two halves of the sarcomere. The size and extensibility of the cross-links are the main determinants of sarcomere extensibility properties of muscle. In non-muscle cells, seems to play a role in chromosome condensation and chromosome segregation during mitosis. Might link the lamina network to chromatin or nuclear actin, or both during interphase. This Caenorhabditis elegans protein is Titin homolog.